The following is a 98-amino-acid chain: Small proline-rich protein 2B (98 aa).

5 consecutive repeat copies span residues 21–29 (PKCPEPCPP), 30–38 (PKCPEPCPP), 39–47 (PVCCEPCPP), 48–56 (PKCPEPCPP), and 57–65 (PVCCEPCPP). The segment at 21–65 (PKCPEPCPPPKCPEPCPPPVCCEPCPPPKCPEPCPPPVCCEPCPP) is 5 X 9 AA approximate tandem repeats.

This sequence belongs to the cornifin (SPRR) family. In terms of tissue distribution, expressed in uterus.

It is found in the cytoplasm. In terms of biological role, cross-linked envelope protein of keratinocytes. It is a keratinocyte protein that first appears in the cell cytosol, but ultimately becomes cross-linked to membrane proteins by transglutaminase. All that results in the formation of an insoluble envelope beneath the plasma membrane. This chain is Small proline-rich protein 2B (Sprr2b), found in Mus musculus (Mouse).